We begin with the raw amino-acid sequence, 301 residues long: Light-independent protochlorophyllide reductase iron-sulfur ATP-binding protein (301 aa).

The disordered stretch occupies residues 1 to 26; the sequence is MSNGSVPVSGIGGRGDGEGSSQVHME. Residues 44 to 49 and K73 contribute to the ATP site; that span reads GIGKST. Residue S48 coordinates Mg(2+). [4Fe-4S] cluster-binding residues include C129 and C163. 214-215 serves as a coordination point for ATP; sequence NR.

The protein belongs to the NifH/BchL/ChlL family. As to quaternary structure, homodimer. Protochlorophyllide reductase is composed of three subunits; BchL, BchN and BchB. The cofactor is [4Fe-4S] cluster.

It carries out the reaction chlorophyllide a + oxidized 2[4Fe-4S]-[ferredoxin] + 2 ADP + 2 phosphate = protochlorophyllide a + reduced 2[4Fe-4S]-[ferredoxin] + 2 ATP + 2 H2O. It functions in the pathway porphyrin-containing compound metabolism; bacteriochlorophyll biosynthesis (light-independent). Its function is as follows. Component of the dark-operative protochlorophyllide reductase (DPOR) that uses Mg-ATP and reduced ferredoxin to reduce ring D of protochlorophyllide (Pchlide) to form chlorophyllide a (Chlide). This reaction is light-independent. The L component serves as a unique electron donor to the NB-component of the complex, and binds Mg-ATP. This is Light-independent protochlorophyllide reductase iron-sulfur ATP-binding protein from Halorhodospira halophila (strain DSM 244 / SL1) (Ectothiorhodospira halophila (strain DSM 244 / SL1)).